Reading from the N-terminus, the 155-residue chain is Ubiquitin-conjugating enzyme E2 14 (155 aa).

A UBC core domain is found at 7–154; that stretch reads SSSRRLTKEY…ARDYVEQFAK (148 aa). Residue Cys91 is the Glycyl thioester intermediate of the active site.

The protein belongs to the ubiquitin-conjugating enzyme family.

The enzyme catalyses S-ubiquitinyl-[E1 ubiquitin-activating enzyme]-L-cysteine + [E2 ubiquitin-conjugating enzyme]-L-cysteine = [E1 ubiquitin-activating enzyme]-L-cysteine + S-ubiquitinyl-[E2 ubiquitin-conjugating enzyme]-L-cysteine.. It functions in the pathway protein modification; protein ubiquitination. In terms of biological role, catalyzes the covalent attachment of ubiquitin to other proteins. Mediates the selective degradation of short-lived and abnormal proteins. This Schizosaccharomyces pombe (strain 972 / ATCC 24843) (Fission yeast) protein is Ubiquitin-conjugating enzyme E2 14 (ubc14).